Reading from the N-terminus, the 742-residue chain is G2/M phase-specific E3 ubiquitin-protein ligase (742 aa).

The C2HC pre-PHD-type zinc finger occupies 10–50 (SPPCVLCGWTDNCPEKYGEKRTYVEYNLTLHNYCLLMSSGI). The segment at 78–127 (LMCNICRKKGASIGCVAPKCKRSYHFPCGLQKECVFQFMEDFRSYCWEHK) adopts a PHD-type 1 zinc-finger fold. Residues 142-192 (QCTICLDLVEHLPLYSVLRSPCCKNTWFHRECLQYQALSAGIFFFRCAVCN) form a PHD-type 2; degenerate zinc finger. The PHD-type 3 zinc-finger motif lies at 236–285 (RCLCKNGRDYNKPDSKWEIKRCQSCGSRGTHLACSSIKSWEQNWECVECR). An HECT domain is found at 417-742 (KGFRQRNFRP…IRSTLRGERE (326 aa)).

Its subcellular location is the nucleus. It is found in the nucleolus. The protein resides in the cytoplasm. The catalysed reaction is S-ubiquitinyl-[E2 ubiquitin-conjugating enzyme]-L-cysteine + [acceptor protein]-L-lysine = [E2 ubiquitin-conjugating enzyme]-L-cysteine + N(6)-ubiquitinyl-[acceptor protein]-L-lysine.. Its pathway is protein modification; protein ubiquitination. Functionally, E3 ubiquitin-protein ligase which accepts ubiquitin from an E2 ubiquitin-conjugating enzyme in the form of a thioester and then directly transfers the ubiquitin to targeted substrates. Essential in early embryonic development to prevent apoptotic death. This Gallus gallus (Chicken) protein is G2/M phase-specific E3 ubiquitin-protein ligase (G2E3).